The sequence spans 354 residues: MCVEELEGAERLDFGGVAELETTPADFEMEKVCENTVSLDFKQARSSSFVPVIRSGDWSDIGGRDYMEDAHVCISDLANNFGHNSVDDEIISFYGVFDGHGGKDAAHYVRDNLPRVIVEDADFPLELEKVVRRSFVQTDSQFAERCSHQNALSSGTTALTAMIFGRSLLVANAGDCRAVLSRRGTAIEMSKDHRTCCLNERKRIESLGGYVDDGYLNGQLAVTRALGDWHLEGLKEVGEPGGPLSAEPELKMITLTKEDEFLIIGSDGIWDFFSNQNAVDFTRKRLQEHNDLRLCCKQIVEEAIRRGASDNLTAVMVSFHQEAPPQLRVNRTGRVERSISAEGLHSLRVLLEGQ.

The PPM-type phosphatase domain maps to 54–319 (RSGDWSDIGG…DNLTAVMVSF (266 aa)). Mn(2+) is bound by residues Asp-98, Gly-99, Asp-267, and Asp-310.

Belongs to the PP2C family. Mg(2+) serves as cofactor. Mn(2+) is required as a cofactor.

It catalyses the reaction O-phospho-L-seryl-[protein] + H2O = L-seryl-[protein] + phosphate. The enzyme catalyses O-phospho-L-threonyl-[protein] + H2O = L-threonyl-[protein] + phosphate. The protein is Probable protein phosphatase 2C 27 of Oryza sativa subsp. japonica (Rice).